The chain runs to 291 residues: ATP synthase gamma chain (291 aa).

Belongs to the ATPase gamma chain family. As to quaternary structure, F-type ATPases have 2 components, CF(1) - the catalytic core - and CF(0) - the membrane proton channel. CF(1) has five subunits: alpha(3), beta(3), gamma(1), delta(1), epsilon(1). CF(0) has three main subunits: a, b and c.

The protein resides in the cell inner membrane. Its function is as follows. Produces ATP from ADP in the presence of a proton gradient across the membrane. The gamma chain is believed to be important in regulating ATPase activity and the flow of protons through the CF(0) complex. This is ATP synthase gamma chain from Burkholderia cenocepacia (strain ATCC BAA-245 / DSM 16553 / LMG 16656 / NCTC 13227 / J2315 / CF5610) (Burkholderia cepacia (strain J2315)).